A 267-amino-acid chain; its full sequence is Glucosamine-6-phosphate deaminase (267 aa).

The active-site Proton acceptor; for enolization step is Asp-72. Residue Asp-141 is the For ring-opening step of the active site. Catalysis depends on His-143, which acts as the Proton acceptor; for ring-opening step. Glu-148 (for ring-opening step) is an active-site residue.

This sequence belongs to the glucosamine/galactosamine-6-phosphate isomerase family. NagB subfamily.

The enzyme catalyses alpha-D-glucosamine 6-phosphate + H2O = beta-D-fructose 6-phosphate + NH4(+). It functions in the pathway amino-sugar metabolism; N-acetylneuraminate degradation; D-fructose 6-phosphate from N-acetylneuraminate: step 5/5. With respect to regulation, allosterically activated by N-acetylglucosamine 6-phosphate (GlcNAc6P). Catalyzes the reversible isomerization-deamination of glucosamine 6-phosphate (GlcN6P) to form fructose 6-phosphate (Fru6P) and ammonium ion. In Borrelia hermsii (strain HS1 / DAH), this protein is Glucosamine-6-phosphate deaminase.